The sequence spans 327 residues: Surface protein P12p (327 aa).

6-Cys domains follow at residues 21–168 (NIEI…LKKN) and 169–304 (IIFG…FSNY). 6 disulfide bridges follow: Cys-25-Cys-60, Cys-74-Cys-144, Cys-93-Cys-142, Cys-173-Cys-208, Cys-223-Cys-285, and Cys-234-Cys-283. Asn-246, Asn-264, and Asn-298 each carry an N-linked (GlcNAc...) asparagine glycan.

Its subcellular location is the cell surface. The protein resides in the cell membrane. In Plasmodium berghei (strain Anka), this protein is Surface protein P12p (P12p).